Here is a 315-residue protein sequence, read N- to C-terminus: Aspartate carbamoyltransferase catalytic subunit (315 aa).

2 residues coordinate carbamoyl phosphate: Arg-64 and Thr-65. Lys-93 serves as a coordination point for L-aspartate. Residues Arg-114, His-142, and Gln-145 each contribute to the carbamoyl phosphate site. L-aspartate contacts are provided by Arg-175 and Arg-237. Leu-276 and Pro-277 together coordinate carbamoyl phosphate.

This sequence belongs to the aspartate/ornithine carbamoyltransferase superfamily. ATCase family. Heterooligomer of catalytic and regulatory chains.

It carries out the reaction carbamoyl phosphate + L-aspartate = N-carbamoyl-L-aspartate + phosphate + H(+). It participates in pyrimidine metabolism; UMP biosynthesis via de novo pathway; (S)-dihydroorotate from bicarbonate: step 2/3. Catalyzes the condensation of carbamoyl phosphate and aspartate to form carbamoyl aspartate and inorganic phosphate, the committed step in the de novo pyrimidine nucleotide biosynthesis pathway. This is Aspartate carbamoyltransferase catalytic subunit from Thermofilum pendens (strain DSM 2475 / Hrk 5).